The chain runs to 219 residues: Probable octanoyltransferase (219 aa).

Residues 43 to 219 form the BPL/LPL catalytic domain; the sequence is QPPKPTIITS…NNLDSFLMSK (177 aa). Substrate contacts are provided by residues 83–90, 151–153, and 164–166; these read RGGQTTFH, AIG, and GLA. The active-site Acyl-thioester intermediate is the Cys182.

It belongs to the LipB family.

It carries out the reaction octanoyl-[ACP] + L-lysyl-[protein] = N(6)-octanoyl-L-lysyl-[protein] + holo-[ACP] + H(+). It participates in protein modification; protein lipoylation via endogenous pathway; protein N(6)-(lipoyl)lysine from octanoyl-[acyl-carrier-protein]: step 1/2. Catalyzes the transfer of endogenously produced octanoic acid from octanoyl-acyl-carrier-protein onto the lipoyl domains of lipoate-dependent enzymes. Lipoyl-ACP can also act as a substrate although octanoyl-ACP is likely to be the physiological substrate. The protein is Probable octanoyltransferase of Schizosaccharomyces pombe (strain 972 / ATCC 24843) (Fission yeast).